The primary structure comprises 138 residues: MRLTQGAFSFLPDLTDEQINKQLAYIVSKGLSANVEYTDDPHPRNSYWELWGLPLFDVKDASAVMYEISSCRKAKPNYYVKVNAFDNTRGIESCVMSFIVNRPANEPGFLLQRQDFEGRTMKYSLHSYATEKPEGARY.

This sequence belongs to the RuBisCO small chain family. Heterohexadecamer of 8 large and 8 small subunits.

It is found in the plastid. It localises to the chloroplast. Its function is as follows. RuBisCO catalyzes two reactions: the carboxylation of D-ribulose 1,5-bisphosphate, the primary event in carbon dioxide fixation, as well as the oxidative fragmentation of the pentose substrate in the photorespiration process. Both reactions occur simultaneously and in competition at the same active site. Although the small subunit is not catalytic it is essential for maximal activity. The chain is Ribulose bisphosphate carboxylase small subunit from Pyropia katadae (Red alga).